The sequence spans 161 residues: uncharacterized protein (161 aa).

As to quaternary structure, interacts with ribosomes.

This is an uncharacterized protein from Saccharomyces cerevisiae (strain ATCC 204508 / S288c) (Baker's yeast).